The sequence spans 323 residues: Calcium homeostasis modulator protein 2 (323 aa).

The Cytoplasmic segment spans residues 1-21; that stretch reads MAALIAENFRFLSLFFKSKDV. The interval 14 to 39 is central pore; it reads LFFKSKDVMIFNGLVALGTVGSQELF. Residues 22 to 43 form a helical membrane-spanning segment; that stretch reads MIFNGLVALGTVGSQELFSVVA. Residues 44–52 lie on the Extracellular side of the membrane; sequence FHCPCSPAR. Cystine bridges form between cysteine 46–cysteine 130 and cysteine 48–cysteine 162. The helical transmembrane segment at 53–76 threads the bilayer; the sequence is NYLYGLAAIGVPALVLFIIGIILN. Over 77–101 the chain is Cytoplasmic; that stretch reads NHTWNLVAECQHRRTKNCSAAPTFL. The helical transmembrane segment at 102–132 threads the bilayer; that stretch reads LLSSILGRAAVAPVTWSVISLLRGEAYVCAL. Over 133 to 179 the chain is Extracellular; sequence SEFVDPSSLTAREEHFPSAHATEILARFPCKENPDNLSDFREEVSRR. The interval 145-152 is hemichannel docking; sequence EEHFPSAH. The helical transmembrane segment at 180 to 206 threads the bilayer; it reads LRYESQLFGWLLIGVVAILVFLTKCLK. The Cytoplasmic portion of the chain corresponds to 207 to 323; that stretch reads HYCSPLSYRQ…DNVEMALLPS (117 aa). The segment at 214–251 is intersubunit interaction; the sequence is YRQEAYWAQYRANEDQLFQRTAEVHSRVLAANNVRRFF.

The protein belongs to the CALHM family. In terms of assembly, homo-undecamer. Two undecameric hemichannels can assemble in a head-to-head manner to form a gap junction. As to expression, placenta.

Its subcellular location is the cell membrane. The enzyme catalyses ATP(in) = ATP(out). Its activity is regulated as follows. Inhibited by Ca(2+) and ruthenium red in a voltage-dependent way. Its function is as follows. Pore-forming subunit of Ca(2+) homeostasis modulator channels. Mediates ATP release from astrocytes and ATP-induced Ca(2+) influx in microglia thus regulating neuronal ATP and Ca(2+) homeostasis, synaptic transmission and neuroinflammatory response. May form intercellular gap junctions. The gating mechanism remains unknown. This chain is Calcium homeostasis modulator protein 2, found in Homo sapiens (Human).